The following is a 459-amino-acid chain: MNHRLVALSVASLALLAPLTVPAQGLRPSSATVGAGVLAPARVPAATGLAADYIVAVVNSEPITNNEVRAALQRVLQQLAQQGNPQVDSKTLVRQVLERLINEKAQLQLARESGIAADEAAIDQAEQNIARQNQLTVAELRRRLTQEGGVPGQFRNQLRDQILLTRLREREVEPRARVSELEIDQFLREQQSSTPAVQQINLAQVLVSVPDTATPVQVTALQARAQRALARARAGEDFVTLVREFSDASDKASLANGGELGLRTADRYPPLFLEATHNLAVGEISALVRSGAGFHILKVLEKKSAALPAMTVTQSRARHILLRVSPQLTESAARDKLNEFKKRVAAGQADFAALARDHSQDGSAAQGGDLGWANPGMFVPEFEAVMNSLTPGQISEPLVSRFGVHLIQLMERRQATLSPQEQREAVRAMLHEKKLDEAYISWAQDVRGRAYVELREPPQ.

An N-terminal signal peptide occupies residues 1 to 23 (MNHRLVALSVASLALLAPLTVPA). PpiC domains are found at residues 197–301 (VQQI…KVLE) and 312–411 (VTQS…QLME).

It is found in the periplasm. The enzyme catalyses [protein]-peptidylproline (omega=180) = [protein]-peptidylproline (omega=0). Its function is as follows. Chaperone involved in the correct folding and assembly of outer membrane proteins. Recognizes specific patterns of aromatic residues and the orientation of their side chains, which are found more frequently in integral outer membrane proteins. May act in both early periplasmic and late outer membrane-associated steps of protein maturation. The polypeptide is Chaperone SurA (Albidiferax ferrireducens (strain ATCC BAA-621 / DSM 15236 / T118) (Rhodoferax ferrireducens)).